Consider the following 273-residue polypeptide: Endoplasmic reticulum resident protein 27 (273 aa).

A signal peptide spans 1-25 (MEAAPSRFMFLLFLLTCELAAEVAA). In terms of domain architecture, Thioredoxin spans 39 to 152 (EPTWLTDVPA…MVTEYNPVTV (114 aa)). N-linked (GlcNAc...) asparagine glycosylation is present at asparagine 100. Residues 230–233 (DEWD) are PDIA3-binding site. The Prevents secretion from ER motif lies at 270-273 (KVEL).

The protein belongs to the protein disulfide isomerase family. As to quaternary structure, interacts with PDIA3.

Its subcellular location is the endoplasmic reticulum lumen. In terms of biological role, specifically binds unfolded proteins and may recruit protein disulfide isomerase PDIA3 to unfolded substrates. Binds protein substrates via a hydrophobic pocket in the C-terminal domain. May play a role in the unfolded stress response. This Homo sapiens (Human) protein is Endoplasmic reticulum resident protein 27 (ERP27).